A 300-amino-acid chain; its full sequence is Auxin-responsive protein IAA7 (300 aa).

2 disordered regions span residues 1-80 (MGEA…DGDK) and 92-125 (VSHS…LASN). The EAR-like (transcriptional repression) signature appears at 43-47 (LSLGL). Residues 92-103 (VSHSQGKANKNK) show a composition bias toward polar residues. In terms of domain architecture, PB1 spans 177-281 (APFIKINMDG…SVKRLRVLKT (105 aa)).

It belongs to the Aux/IAA family. In terms of assembly, homodimers and heterodimers. Expressed at low levels in roots and shoots.

It localises to the nucleus. In terms of biological role, aux/IAA proteins are short-lived transcriptional factors that function as repressors of early auxin response genes at low auxin concentrations. The chain is Auxin-responsive protein IAA7 (IAA7) from Oryza sativa subsp. japonica (Rice).